Consider the following 144-residue polypeptide: Gastric inhibitory polypeptide (144 aa).

The first 21 residues, 1-21 (MVALKTCSLLLVLLFLAVGLG), serve as a signal peptide directing secretion. Propeptides lie at residues 22 to 42 (EKEEVEFRSHAKFAGPRPRGP) and 87 to 144 (EARA…LRSQ). The disordered stretch occupies residues 94–113 (AGQSQGKEDKEAQESSLPKS).

Belongs to the glucagon family.

The protein resides in the secreted. Functionally, potent stimulator of insulin secretion and relatively poor inhibitor of gastric acid secretion. This Mus musculus (Mouse) protein is Gastric inhibitory polypeptide (Gip).